A 409-amino-acid polypeptide reads, in one-letter code: TM2 domain-containing protein ZK858.5 (409 aa).

Positions 8 to 55 constitute a TM2 domain; it reads VKPWIVRIILIVGGLFGAHRLYLKQVPEAFVFFSTLGVLLIGWLYDSF. A run of 6 helical transmembrane segments spans residues 10–30, 37–57, 104–124, 127–147, 168–190, and 209–229; these read PWIV…RLYL, FVFF…SFMF, VLYG…TFGW, INLI…IYII, MFIM…AIVS, and HFLF…LGCS.

Belongs to the TM2 family.

It localises to the membrane. This is TM2 domain-containing protein ZK858.5 from Caenorhabditis elegans.